Consider the following 839-residue polypeptide: Homeobox-leucine zipper protein HOX10 (839 aa).

Disordered regions lie at residues 1–24 (MAAA…SGMD) and 132–157 (QNTP…RDAS). A DNA-binding region (homeobox) is located at residues 24 to 87 (DSGKYVRYTP…NRRCRDKQRK (64 aa)). Positions 91–134 (RLQAVNRKLTAMNKLLMEENERLQKQVSQLVHENAHMRQQLQNT) form a coiled coil. In terms of domain architecture, START spans 155-383 (DASNPSGLLS…IAQETSGEVV (229 aa)).

The protein belongs to the HD-ZIP homeobox family. Class III subfamily. Expressed in stems, leaf sheaths and blades and panicles.

It localises to the nucleus. Functionally, probable transcription factor. In Oryza sativa subsp. indica (Rice), this protein is Homeobox-leucine zipper protein HOX10 (HOX10).